A 129-amino-acid chain; its full sequence is Small ribosomal subunit protein uS11 (129 aa).

This sequence belongs to the universal ribosomal protein uS11 family. In terms of assembly, part of the 30S ribosomal subunit. Interacts with proteins S7 and S18. Binds to IF-3.

In terms of biological role, located on the platform of the 30S subunit, it bridges several disparate RNA helices of the 16S rRNA. Forms part of the Shine-Dalgarno cleft in the 70S ribosome. The protein is Small ribosomal subunit protein uS11 of Thermosipho melanesiensis (strain DSM 12029 / CIP 104789 / BI429).